Here is a 218-residue protein sequence, read N- to C-terminus: Adenylate kinase (218 aa).

Position 10–15 (10–15) interacts with ATP; it reads GAGKGT. Positions 30–59 are NMP; it reads STGDMLRAAVKAGTPLGQQAKAVMESGGLV. Residues Thr31, Arg36, 57–59, 85–88, and Gln92 each bind AMP; these read GLV and GFPR. The LID stretch occupies residues 122–159; it reads GRRSHPASGRTYHVKFNPPKVEGKDDITGEDLIQRKDD. Residues Arg123 and 132–133 contribute to the ATP site; that span reads TY. The AMP site is built by Arg156 and Arg167. Gly203 contacts ATP.

Belongs to the adenylate kinase family. Monomer.

The protein resides in the cytoplasm. The catalysed reaction is AMP + ATP = 2 ADP. Its pathway is purine metabolism; AMP biosynthesis via salvage pathway; AMP from ADP: step 1/1. Functionally, catalyzes the reversible transfer of the terminal phosphate group between ATP and AMP. Plays an important role in cellular energy homeostasis and in adenine nucleotide metabolism. This chain is Adenylate kinase, found in Variovorax paradoxus (strain S110).